We begin with the raw amino-acid sequence, 865 residues long: Cadherin-related family member 1 (865 aa).

An N-terminal signal peptide occupies residues 1–23; it reads MKHVRHFIPSLFLSLVHVCLVQA. Over 24–705 the chain is Extracellular; it reads NYAPYFFDNG…TKDNPMKALG (682 aa). 6 consecutive Cadherin domains span residues 38 to 137, 138 to 249, 250 to 356, 362 to 475, 476 to 579, and 571 to 690; these read NGNM…SPEF, INTP…PPMF, IGTP…PPTF, PQNR…VPKF, SSDY…SPEF, and DVND…GPMA. Residues 706–726 form a helical membrane-spanning segment; the sequence is VLAGVMGIMVLITIMISTAMF. The Cytoplasmic segment spans residues 727–865; that stretch reads WRNKRSNKIM…RNASMGEPHI (139 aa). A disordered region spans residues 782 to 810; sequence ENSNNNVQAAPVPPAAPLPPPPPALAASG. The span at 792–805 shows a compositional bias: pro residues; the sequence is PVPPAAPLPPPPPA.

The protein resides in the membrane. Potential calcium-dependent cell-adhesion protein. The sequence is that of Cadherin-related family member 1 (CDHR1) from Gallus gallus (Chicken).